Consider the following 509-residue polypeptide: Meiotic fizzy-related protein 2 (509 aa).

WD repeat units lie at residues 159–196, 199–238, 242–281, 287–326, 329–371, and 437–477; these read LDDF…SIME, PTTY…NRCD, HHDG…MRRV, VHQE…NKKF, IHLA…RIHS, and IHTH…QEIH.

Belongs to the WD repeat CDC20/Fizzy family.

The protein resides in the nucleus. Functionally, has a role in meiosis. This chain is Meiotic fizzy-related protein 2 (mfr2), found in Schizosaccharomyces pombe (strain 972 / ATCC 24843) (Fission yeast).